The primary structure comprises 288 residues: Glycine--tRNA ligase alpha subunit (288 aa).

This sequence belongs to the class-II aminoacyl-tRNA synthetase family. In terms of assembly, tetramer of two alpha and two beta subunits.

The protein resides in the cytoplasm. The catalysed reaction is tRNA(Gly) + glycine + ATP = glycyl-tRNA(Gly) + AMP + diphosphate. This Rickettsia rickettsii (strain Iowa) protein is Glycine--tRNA ligase alpha subunit.